The primary structure comprises 527 residues: UDP-glucuronosyltransferase 2A3 (527 aa).

Residues 1–23 (MRSEKSALVFLLLQLFCVGCGFC) form the signal peptide. Topologically, residues 24–486 (GKVLVWPCDM…AAHNLTWFQH (463 aa)) are extracellular. Asn-313 is a glycosylation site (N-linked (GlcNAc...) asparagine). A helical transmembrane segment spans residues 487 to 507 (YSIDVIGFLLACVATAIFLFT). Residues 508–523 (KCCLFSCQKFNKTRKI) lie on the Cytoplasmic side of the membrane.

The protein belongs to the UDP-glycosyltransferase family.

Its subcellular location is the membrane. It catalyses the reaction glucuronate acceptor + UDP-alpha-D-glucuronate = acceptor beta-D-glucuronoside + UDP + H(+). Its function is as follows. UDP-glucuronosyltransferases catalyze phase II biotransformation reactions in which lipophilic substrates are conjugated with glucuronic acid to increase water solubility and enhance excretion. They are of major importance in the conjugation and subsequent elimination of potentially toxic xenobiotics and endogenous compounds. The chain is UDP-glucuronosyltransferase 2A3 (UGT2A3) from Pongo abelii (Sumatran orangutan).